A 1058-amino-acid chain; its full sequence is Isoleucine--tRNA ligase (1058 aa).

The 'HIGH' region signature appears at 48–58; that stretch reads PYTTGHIHLGT. The short motif at 596 to 600 is the 'KMSKS' region element; the sequence is KMSKS. Lysine 599 serves as a coordination point for ATP.

This sequence belongs to the class-I aminoacyl-tRNA synthetase family. IleS type 2 subfamily. As to quaternary structure, monomer. Requires Zn(2+) as cofactor.

It is found in the cytoplasm. The catalysed reaction is tRNA(Ile) + L-isoleucine + ATP = L-isoleucyl-tRNA(Ile) + AMP + diphosphate. Its function is as follows. Catalyzes the attachment of isoleucine to tRNA(Ile). As IleRS can inadvertently accommodate and process structurally similar amino acids such as valine, to avoid such errors it has two additional distinct tRNA(Ile)-dependent editing activities. One activity is designated as 'pretransfer' editing and involves the hydrolysis of activated Val-AMP. The other activity is designated 'posttransfer' editing and involves deacylation of mischarged Val-tRNA(Ile). In Methanosarcina mazei (strain ATCC BAA-159 / DSM 3647 / Goe1 / Go1 / JCM 11833 / OCM 88) (Methanosarcina frisia), this protein is Isoleucine--tRNA ligase.